Here is a 486-residue protein sequence, read N- to C-terminus: Glycogen synthase 2 (486 aa).

ADP-alpha-D-glucose is bound at residue Lys-15.

Belongs to the glycosyltransferase 1 family. Bacterial/plant glycogen synthase subfamily.

The catalysed reaction is [(1-&gt;4)-alpha-D-glucosyl](n) + ADP-alpha-D-glucose = [(1-&gt;4)-alpha-D-glucosyl](n+1) + ADP + H(+). The protein operates within glycan biosynthesis; glycogen biosynthesis. Synthesizes alpha-1,4-glucan chains using ADP-glucose. This Rhizobium meliloti (strain 1021) (Ensifer meliloti) protein is Glycogen synthase 2 (glgA2).